Here is a 521-residue protein sequence, read N- to C-terminus: Bifunctional dihydrofolate reductase-thymidylate synthase (521 aa).

The 211-residue stretch at 22–232 (AFSLVVAVDE…TKYYFEKLIP (211 aa)) folds into the DHFR domain. Substrate is bound at residue valine 26. NADP(+) is bound by residues alanine 28 and 34–40 (GIGDGRS). Aspartate 48 lines the substrate pocket. NADP(+)-binding positions include 78-80 (RKT) and 99-102 (LSST). Residues isoleucine 154, tyrosine 160, and threonine 178 each contribute to the substrate site. 155–162 (GGGSVYAE) contributes to the NADP(+) binding site. The thymidylate synthase stretch occupies residues 237 to 521 (EEQYLSLVDR…YPPISMKMAV (285 aa)). Arginine 257 contacts dUMP. Residue cysteine 403 is part of the active site. DUMP-binding positions include histidine 404, 422–426 (QRSCD), asparagine 434, and 464–466 (HVY).

This sequence in the N-terminal section; belongs to the dihydrofolate reductase family. It in the C-terminal section; belongs to the thymidylate synthase family. In terms of assembly, homodimer.

It catalyses the reaction (6S)-5,6,7,8-tetrahydrofolate + NADP(+) = 7,8-dihydrofolate + NADPH + H(+). The catalysed reaction is dUMP + (6R)-5,10-methylene-5,6,7,8-tetrahydrofolate = 7,8-dihydrofolate + dTMP. Its pathway is cofactor biosynthesis; tetrahydrofolate biosynthesis; 5,6,7,8-tetrahydrofolate from 7,8-dihydrofolate: step 1/1. Bifunctional enzyme. Involved in de novo dTMP biosynthesis. Key enzyme in folate metabolism. Catalyzes an essential reaction for de novo glycine and purine synthesis, DNA precursor synthesis, and for the conversion of dUMP to dTMP. This is Bifunctional dihydrofolate reductase-thymidylate synthase from Trypanosoma cruzi.